The primary structure comprises 62 residues: DNA-binding protein 7b (62 aa).

The protein belongs to the 7 kDa DNA-binding/endoribonuclease P2 family. As to quaternary structure, monomer.

The protein localises to the cytoplasm. Can constrain negative DNA supercoils. May be involved in maintaining the integrity of the genome at high temperature. This is DNA-binding protein 7b from Acidianus hospitalis (strain W1).